Reading from the N-terminus, the 192-residue chain is Rhomboid protease GlpG (192 aa).

Residues 1-10 (MKNFLAQQGK) are Cytoplasmic-facing. A helical transmembrane segment spans residues 11-31 (ITLILTALCVLIYLAQQLGFE). Topologically, residues 32–57 (DDIMYLMHYPAYEEQDSEVWRYISHT) are periplasmic. A helical transmembrane segment spans residues 58 to 78 (LVHLSNLHILFNLSWFFIFGG). Over 79–82 (MIER) the chain is Cytoplasmic. The helical transmembrane segment at 83 to 103 (TFGSVKLLMLYVVASAITGYV) threads the bilayer. Residues 104 to 107 (QNYV) are Periplasmic-facing. The chain crosses the membrane as a helical span at residues 108–128 (SGPAFFGLSGVVYAVLGYVFI). Ser-116 acts as the Nucleophile in catalysis. Over 129–141 (RDKLNHHLFDLPE) the chain is Cytoplasmic. The helical transmembrane segment at 142-162 (GFFTMLLVGIALGFISPLFGV) threads the bilayer. Residue Glu-163 is a topological domain, periplasmic. A helical membrane pass occupies residues 164–184 (MGNAAHISGLIVGLIWGFIDS). Residue His-169 is part of the active site. The Cytoplasmic segment spans residues 185–192 (KLRKNSLE).

This sequence belongs to the peptidase S54 family.

The protein localises to the cell inner membrane. It carries out the reaction Cleaves type-1 transmembrane domains using a catalytic dyad composed of serine and histidine that are contributed by different transmembrane domains.. Rhomboid-type serine protease that catalyzes intramembrane proteolysis. The polypeptide is Rhomboid protease GlpG (glpG) (Haemophilus influenzae (strain ATCC 51907 / DSM 11121 / KW20 / Rd)).